The chain runs to 262 residues: Ornithine carbamoyltransferase (262 aa).

Residues 3-7 (STRTR), Gln-30, Arg-54, and 81-84 (HPTQ) each bind carbamoyl phosphate. L-ornithine contacts are provided by residues Asn-114, Asp-178, and 182 to 183 (SM). Carbamoyl phosphate-binding positions include 219-222 (HCLP) and Thr-247.

It belongs to the aspartate/ornithine carbamoyltransferase superfamily. OTCase family.

The protein resides in the cytoplasm. It carries out the reaction carbamoyl phosphate + L-ornithine = L-citrulline + phosphate + H(+). It participates in amino-acid biosynthesis; L-arginine biosynthesis; L-arginine from L-ornithine and carbamoyl phosphate: step 1/3. Functionally, reversibly catalyzes the transfer of the carbamoyl group from carbamoyl phosphate (CP) to the N(epsilon) atom of ornithine (ORN) to produce L-citrulline. In Neisseria polysaccharea, this protein is Ornithine carbamoyltransferase (argF).